Consider the following 183-residue polypeptide: Holliday junction branch migration complex subunit RuvA (183 aa).

A domain I region spans residues 1–63; sequence MIVGLIGVVE…EDAHLLYGFL (63 aa). The domain II stretch occupies residues 64–139; sequence EESEKILFER…FFIQDENRPA (76 aa). Position 139 (Ala-139) is a region of interest, flexible linker. Positions 139–183 are domain III; the sequence is ARNEVFLALESLGFKSAEINPVLKTLKPHLSIEAAIKEALQQLRS.

The protein belongs to the RuvA family. In terms of assembly, homotetramer. Forms an RuvA(8)-RuvB(12)-Holliday junction (HJ) complex. HJ DNA is sandwiched between 2 RuvA tetramers; dsDNA enters through RuvA and exits via RuvB. An RuvB hexamer assembles on each DNA strand where it exits the tetramer. Each RuvB hexamer is contacted by two RuvA subunits (via domain III) on 2 adjacent RuvB subunits; this complex drives branch migration. In the full resolvosome a probable DNA-RuvA(4)-RuvB(12)-RuvC(2) complex forms which resolves the HJ.

It is found in the cytoplasm. In terms of biological role, the RuvA-RuvB-RuvC complex processes Holliday junction (HJ) DNA during genetic recombination and DNA repair, while the RuvA-RuvB complex plays an important role in the rescue of blocked DNA replication forks via replication fork reversal (RFR). RuvA specifically binds to HJ cruciform DNA, conferring on it an open structure. The RuvB hexamer acts as an ATP-dependent pump, pulling dsDNA into and through the RuvAB complex. HJ branch migration allows RuvC to scan DNA until it finds its consensus sequence, where it cleaves and resolves the cruciform DNA. In Helicobacter pylori (strain J99 / ATCC 700824) (Campylobacter pylori J99), this protein is Holliday junction branch migration complex subunit RuvA.